Reading from the N-terminus, the 459-residue chain is NADH oxidase (459 aa).

Residue Asn-10 coordinates FAD. The active-site Proton acceptor is His-11. FAD contacts are provided by Ala-12, Asp-34, Gln-35, Cys-44, Val-81, Ala-110, Ser-113, Lys-143, and Tyr-172. The active-site Redox-active is the Cys-44. Cys-44 bears the Cysteine sulfinic acid (-SO2H) mark. NAD(+) contacts are provided by Ile-173, Asp-192, Tyr-201, and Gly-256. Asp-294 is a binding site for FAD. Ala-310 serves as a coordination point for NAD(+). FAD is bound by residues Leu-311, Ala-312, and Ser-313. An NAD(+)-binding site is contributed by Gly-341. Phe-439 contributes to the FAD binding site.

This sequence belongs to the class-III pyridine nucleotide-disulfide oxidoreductase family. It depends on FAD as a cofactor.

Its subcellular location is the secreted. The protein localises to the cell wall. The catalysed reaction is 2 NADH + O2 + 2 H(+) = 2 NAD(+) + 2 H2O. In terms of biological role, catalyzes the four-electron reduction of molecular oxygen to water. Plays a role in redox balance maintenance. May be involved in mediating bacterial adhesion to host cells. May be considered a potential virulence factor. The sequence is that of NADH oxidase from Streptococcus pneumoniae (strain ATCC BAA-255 / R6).